Here is a 539-residue protein sequence, read N- to C-terminus: Hydroxylamine reductase (539 aa).

Residues Cys-3, Cys-6, Cys-13, and Cys-19 each coordinate [4Fe-4S] cluster. The hybrid [4Fe-2O-2S] cluster site is built by His-240, Glu-264, Cys-308, Cys-395, Cys-423, Cys-448, Glu-482, and Lys-484. Cys-395 is subject to Cysteine persulfide.

This sequence belongs to the HCP family. [4Fe-4S] cluster serves as cofactor. Requires hybrid [4Fe-2O-2S] cluster as cofactor.

It localises to the cytoplasm. It catalyses the reaction A + NH4(+) + H2O = hydroxylamine + AH2 + H(+). Catalyzes the reduction of hydroxylamine to form NH(3) and H(2)O. This chain is Hydroxylamine reductase, found in Thermodesulfovibrio yellowstonii (strain ATCC 51303 / DSM 11347 / YP87).